Here is a 234-residue protein sequence, read N- to C-terminus: MAKVSQRVKKIQTKVELRPYKGTEALNLLKELATAKFTETAEAHISLKIDTKYADQQLRTTLVLPKGTGKKVRIAVVAQGEKINEALAAGADLAGAEDLIQNIMKGDLDFDRLIATPDMMPAIAKLGKVLGPRGLMPSPKSGTVTADIKEAIDEFKKGKLEYRADKSGIVHILFGKTDFSVEDLLANLEAVQESIDKNRPSGVKGRYWKSFYICSTMGPSIQLDISEFRDKVFS.

Belongs to the universal ribosomal protein uL1 family. As to quaternary structure, part of the 50S ribosomal subunit.

It localises to the plastid. It is found in the chloroplast. Functionally, binds directly to 23S rRNA. Might be involved in E site tRNA release (Potential). This Rhodomonas salina (Cryptomonas salina) protein is Large ribosomal subunit protein uL1c (rpl1).